A 383-amino-acid polypeptide reads, in one-letter code: Protein delta homolog 2 (383 aa).

A signal peptide spans 1–26; that stretch reads MPSGCRCLHLVCLLCILGAPGQPVRA. EGF-like domains follow at residues 27-58, 62-89, 91-129, and 131-172; these read DDCS…LHCE, RMPG…KFCD, DEHI…RDCE, and KAGP…ARCE. The Extracellular segment spans residues 27–306; it reads DDCSSHCDLA…RQEAGLGEPS (280 aa). Disulfide bonds link Cys-29–Cys-40, Cys-33–Cys-46, Cys-48–Cys-57, Cys-66–Cys-71, Cys-79–Cys-88, Cys-95–Cys-107, Cys-101–Cys-117, Cys-119–Cys-128, Cys-135–Cys-148, Cys-142–Cys-160, Cys-162–Cys-171, Cys-178–Cys-189, Cys-183–Cys-198, Cys-200–Cys-209, Cys-216–Cys-227, Cys-221–Cys-236, and Cys-238–Cys-247. The N-linked (GlcNAc...) asparagine glycan is linked to Asn-157. Residues 174–210 form the EGF-like 5; calcium-binding domain; sequence NVDDCLMRPCANGATCLDGINRFSCLCPEGFAGRFCT. The EGF-like 6; calcium-binding domain occupies 212-248; the sequence is NLDDCASRPCQRGARCRDRVHDFDCLCPSGYGGKTCE. Residues 307–327 traverse the membrane as a helical segment; it reads LVALVVFGALTAALVLATVLL. Residues 328–383 are Cytoplasmic-facing; that stretch reads TLRAWRRGVCPPGPCCYPAPHYAPACQDQECQVSMLPAGLPLPRDLPPEPGKTTAL.

It is found in the membrane. Functionally, regulates adipogenesis. This Homo sapiens (Human) protein is Protein delta homolog 2 (DLK2).